Here is a 442-residue protein sequence, read N- to C-terminus: U11/U12 small nuclear ribonucleoprotein 65 kDa protein (442 aa).

The RRM 1 domain maps to 28-102; the sequence is VTLLVRHLPD…KVLQVQRANK (75 aa). Disordered stretches follow at residues 101-138, 200-242, and 290-317; these read NKPN…QILS, LALP…GRKR, and SKVT…DSNL. Residues 102–116 are compositionally biased toward basic and acidic residues; the sequence is KPNDNKKSRQIEESV. A compositionally biased stretch (polar residues) spans 117–136; the sequence is TKGNAFSTVSTNNDSKSGQI. The segment covering 200–209 has biased composition (pro residues); it reads LALPTPPLPK. Acidic residues predominate over residues 297–307; that stretch reads YKEESENEDPA. An RRM 2 domain is found at 352–434; sequence VVLYIKNLAK…KPMIIQFGRT (83 aa).

In terms of assembly, component of the U11/U12 snRNPs that are part of the U12-type spliceosome. Forms a complex with U12 snRNA. In terms of tissue distribution, ubiquitous.

It localises to the nucleus. Component of minor spliceosome required for U12-type intron splicing and alternative splicing of many introns. Binds specifically to U12 snRNA, which is necessary for branch-point site recognition. Required for normal plant development. In Arabidopsis thaliana (Mouse-ear cress), this protein is U11/U12 small nuclear ribonucleoprotein 65 kDa protein (SNRNP65).